The chain runs to 376 residues: Ribosomal RNA large subunit methyltransferase G (376 aa).

The protein belongs to the methyltransferase superfamily. RlmG family.

It is found in the cytoplasm. The catalysed reaction is guanosine(1835) in 23S rRNA + S-adenosyl-L-methionine = N(2)-methylguanosine(1835) in 23S rRNA + S-adenosyl-L-homocysteine + H(+). Specifically methylates the guanine in position 1835 (m2G1835) of 23S rRNA. This chain is Ribosomal RNA large subunit methyltransferase G, found in Cronobacter sakazakii (strain ATCC BAA-894) (Enterobacter sakazakii).